We begin with the raw amino-acid sequence, 417 residues long: Carboxypeptidase B (417 aa).

The N-terminal stretch at Met1 to Ala15 is a signal peptide. The propeptide at His16 to Arg110 is activation peptide. In terms of domain architecture, Peptidase M14 spans Lys118–Val412. A disulfide bridge links Cys173 with Cys186. Residues His176 and Glu179 each contribute to the Zn(2+) site. Substrate contacts are provided by residues His176 to Glu179, Arg234, and Asn251 to Arg252. 2 disulfide bridges follow: Cys245–Cys268 and Cys259–Cys273. A Zn(2+)-binding site is contributed by His304. Substrate is bound by residues Ser305–Tyr306 and Tyr356. Residue Glu378 is the Proton donor/acceptor of the active site.

This sequence belongs to the peptidase M14 family. Zn(2+) is required as a cofactor. As to expression, pancreas.

Its subcellular location is the secreted. It localises to the zymogen granule lumen. It catalyses the reaction Preferential release of a C-terminal lysine or arginine amino acid.. This is Carboxypeptidase B (CPB1) from Homo sapiens (Human).